Reading from the N-terminus, the 275-residue chain is Uroporphyrinogen-III synthase (275 aa).

It belongs to the uroporphyrinogen-III synthase family.

It catalyses the reaction hydroxymethylbilane = uroporphyrinogen III + H2O. The protein operates within porphyrin-containing compound metabolism; protoporphyrin-IX biosynthesis; coproporphyrinogen-III from 5-aminolevulinate: step 3/4. In terms of biological role, catalyzes cyclization of the linear tetrapyrrole, hydroxymethylbilane, to the macrocyclic uroporphyrinogen III, the fourth step in the heme biosynthetic pathway. In Saccharomyces cerevisiae (strain ATCC 204508 / S288c) (Baker's yeast), this protein is Uroporphyrinogen-III synthase.